Consider the following 276-residue polypeptide: 2-dehydro-3-deoxyphosphooctonate aldolase (276 aa).

The protein belongs to the KdsA family.

It is found in the cytoplasm. It carries out the reaction D-arabinose 5-phosphate + phosphoenolpyruvate + H2O = 3-deoxy-alpha-D-manno-2-octulosonate-8-phosphate + phosphate. It functions in the pathway carbohydrate biosynthesis; 3-deoxy-D-manno-octulosonate biosynthesis; 3-deoxy-D-manno-octulosonate from D-ribulose 5-phosphate: step 2/3. The protein operates within bacterial outer membrane biogenesis; lipopolysaccharide biosynthesis. The protein is 2-dehydro-3-deoxyphosphooctonate aldolase of Xanthomonas axonopodis pv. citri (strain 306).